The sequence spans 341 residues: Anthranilate phosphoribosyltransferase (341 aa).

Residues glycine 79, 82 to 83, threonine 87, 89 to 92, 107 to 115, and serine 119 contribute to the 5-phospho-alpha-D-ribose 1-diphosphate site; these read GD, NIST, and KHGNRAVSS. Residue glycine 79 coordinates anthranilate. Serine 91 is a binding site for Mg(2+). Position 110 (asparagine 110) interacts with anthranilate. Arginine 165 provides a ligand contact to anthranilate. Mg(2+)-binding residues include aspartate 224 and glutamate 225.

Belongs to the anthranilate phosphoribosyltransferase family. In terms of assembly, homodimer. Requires Mg(2+) as cofactor.

It carries out the reaction N-(5-phospho-beta-D-ribosyl)anthranilate + diphosphate = 5-phospho-alpha-D-ribose 1-diphosphate + anthranilate. It participates in amino-acid biosynthesis; L-tryptophan biosynthesis; L-tryptophan from chorismate: step 2/5. In terms of biological role, catalyzes the transfer of the phosphoribosyl group of 5-phosphorylribose-1-pyrophosphate (PRPP) to anthranilate to yield N-(5'-phosphoribosyl)-anthranilate (PRA). This is Anthranilate phosphoribosyltransferase from Bacillus cereus (strain ZK / E33L).